The primary structure comprises 109 residues: Prefoldin subunit 1 (109 aa).

Ser-2 is modified (N-acetylserine).

This sequence belongs to the prefoldin subunit beta family. In terms of assembly, heterohexamer of two PFD-alpha type and four PFD-beta type subunits.

It localises to the cytoplasm. Functionally, binds specifically to cytosolic chaperonin (c-CPN) and transfers target proteins to it. Binds to nascent polypeptide chain and promotes folding in an environment in which there are many competing pathways for nonnative proteins. This Saccharomyces cerevisiae (strain ATCC 204508 / S288c) (Baker's yeast) protein is Prefoldin subunit 1 (PFD1).